Reading from the N-terminus, the 532-residue chain is Drimenyl diphosphate synthase (532 aa).

(2E,6E)-farnesyl diphosphate is bound by residues R121, K122, Q152, and W154. E158 is a binding site for Mg(2+). PFTB repeat units follow at residues 275 to 317 (PAAM…RVAG), 325 to 367 (IAAA…APNP), 428 to 469 (KRQA…SRDG), and 475 to 518 (LARA…CVLL). The active-site Proton donor is D304. Residue R502 participates in (2E,6E)-farnesyl diphosphate binding.

This sequence belongs to the terpene cyclase/mutase family. Mg(2+) serves as cofactor. The cofactor is Ni(2+). It depends on Co(2+) as a cofactor.

It catalyses the reaction (2E,6E)-farnesyl diphosphate = (5S,9S,10S)-drim-7-en-11-yl diphosphate. Its function is as follows. Catalyzes the cyclization of farnesyl diphosphate (FPP) to drimenyl diphosphate. This Streptantibioticus cattleyicolor (strain ATCC 35852 / DSM 46488 / JCM 4925 / NBRC 14057 / NRRL 8057) (Streptomyces cattleya) protein is Drimenyl diphosphate synthase.